Reading from the N-terminus, the 427-residue chain is Rhodocoxin reductase (427 aa).

Position 2–34 (2–34) interacts with FAD; that stretch reads SIVIIGSGQAGFEAAVSLRSHGFSGTITLVGDE. 144–172 contributes to the NAD(+) binding site; the sequence is SLVVIGAGFIGLEVAAAARKKGLDVTVVE.

Belongs to the FAD-dependent oxidoreductase family. FAD serves as cofactor.

The degradation of the thiocarbamate herbicide EPTC by cytochrome CYP116 (thcB) requires the participation of a flavoprotein, rhodocoxin reductase, and an iron-sulfur protein, rhodocoxin, to mediate the transfer of electrons from NADH to P450 for oxygen activation. The chain is Rhodocoxin reductase (thcD) from Rhodococcus erythropolis (Arthrobacter picolinophilus).